Here is an 88-residue protein sequence, read N- to C-terminus: Putative cancer susceptibility gene HEPN1 protein (88 aa).

As to expression, expressed in liver. Expression is either down-regulated or lost in hepatocellular carcinomas (HCC).

It is found in the cytoplasm. The polypeptide is Putative cancer susceptibility gene HEPN1 protein (HEPN1) (Homo sapiens (Human)).